A 245-amino-acid chain; its full sequence is AP-1-like transcription factor YAP5 (245 aa).

Residues 34 to 47 (LPHRAAQRRKRVHR) are compositionally biased toward basic residues. Positions 34–77 (LPHRAAQRRKRVHRLHEDYETEENDEELQKKKRQNRDAQRAYRE) are disordered. In terms of domain architecture, bZIP spans 58–121 (DEELQKKKRQ…QAKESENHAL (64 aa)). A basic motif region spans residues 63–82 (KKKRQNRDAQRAYRERKNNK). The segment covering 68–77 (NRDAQRAYRE) has biased composition (basic and acidic residues). Residues 86 to 114 (LEETIESLSKVVKNYETKLNRLQNELQAK) form a leucine-zipper region.

This sequence belongs to the bZIP family. YAP subfamily. As to quaternary structure, homodimer.

It localises to the cytoplasm. Its subcellular location is the nucleus. In terms of biological role, transcription activator involved in the regulation of genes expressed in response to environmental changes and metabolic requirements. According to genome-wide promoter binding and gene expression studies it is a coregulator for the expression of ribosomal genes, while its own expression is induced by the cell cycle specific activator SBF (SWI4-SWI6). The protein is AP-1-like transcription factor YAP5 (YAP5) of Saccharomyces cerevisiae (strain ATCC 204508 / S288c) (Baker's yeast).